Here is a 318-residue protein sequence, read N- to C-terminus: Molybdenum cofactor insertion chaperone PaoD (318 aa).

Homodimer in solution. Interacts with MocA.

Chaperone required for the production of an active PaoABC aldehyde oxidoreductase. Stabilizes the PaoC subunit and is required for the insertion of the molybdenum cofactor into this subunit. Binds molybdenum cofactor. Binds the molybdopterin cytosine dinucleotide (MCD) form of the cofactor after its formation by the molybdenum cofactor cytidylyltransferase MocA. The protein is Molybdenum cofactor insertion chaperone PaoD of Escherichia coli (strain K12).